A 164-amino-acid chain; its full sequence is Peptidyl-prolyl cis-trans isomerase A (164 aa).

Methionine 1 carries the N-acetylmethionine modification. Valine 2 carries the N-acetylvaline; in Peptidyl-prolyl cis-trans isomerase A, N-terminally processed modification. A PPIase cyclophilin-type domain is found at 7–163 (FFDIAVDGEP…KKITIANCGQ (157 aa)). Lysine 28 carries the post-translational modification N6-acetyllysine; alternate. Lysine 28 participates in a covalent cross-link: Glycyl lysine isopeptide (Lys-Gly) (interchain with G-Cter in SUMO2); alternate. A Glycyl lysine isopeptide (Lys-Gly) (interchain with G-Cter in ubiquitin); alternate cross-link involves residue lysine 28. Lysine 44 and lysine 76 each carry N6-acetyllysine. At serine 77 the chain carries Phosphoserine. An N6-acetyllysine; alternate modification is found at lysine 82. Lysine 82 is covalently cross-linked (Glycyl lysine isopeptide (Lys-Gly) (interchain with G-Cter in SUMO2); alternate). Threonine 93 carries the post-translational modification Phosphothreonine. N-linked (GlcNAc...) asparagine glycosylation is present at asparagine 108. Residues lysine 125 and lysine 133 each carry the N6-acetyllysine modification.

The protein belongs to the cyclophilin-type PPIase family. PPIase A subfamily. In terms of assembly, interacts with protein phosphatase PPP3CA/calcineurin A. Interacts with isoform 2 of BSG/CD147. Interacts with FOXO1; the interaction promotes FOXO1 dephosphorylation, nuclear accumulation and transcriptional activity. Interacts with integrin ITGA2B:ITGB3; the interaction is ROS and peptidyl-prolyl cis-trans isomerase (PPIase) activity-dependent and is increased in the presence of thrombin. Interacts with MAP3K5. Interacts with TARDBP; the interaction is dependent on the RNA-binding activity of TARDBP and the PPIase activity of PPIA/CYPA and the acetylation of PPIA/CYPA at Lys-125 favors the interaction. Interacts with HNRNPA1, HNRNPA2B1, HNRNPC, RBMX, HNRNPK and HNRNPM. Post-translationally, acetylation at Lys-125 markedly inhibits catalysis of cis to trans isomerization. PPIA acetylation also antagonizes the immunosuppressive effects of cyclosporine by inhibiting the sequential steps of cyclosporine binding and calcineurin inhibition. Acetylation at Lys-125 favors the interaction with TARDBP.

It localises to the cytoplasm. It is found in the secreted. The protein resides in the nucleus. It carries out the reaction [protein]-peptidylproline (omega=180) = [protein]-peptidylproline (omega=0). Its activity is regulated as follows. Binds cyclosporin A (CsA). CsA mediates some of its effects via an inhibitory action on PPIase. Catalyzes the cis-trans isomerization of proline imidic peptide bonds in oligopeptides. Exerts a strong chemotactic effect on leukocytes partly through activation of one of its membrane receptors BSG/CD147, initiating a signaling cascade that culminates in MAPK/ERK activation. Activates endothelial cells (ECs) in a proinflammatory manner by stimulating activation of NF-kappa-B and ERK, JNK and p38 MAP-kinases and by inducing expression of adhesion molecules including SELE and VCAM1. Induces apoptosis in ECs by promoting the FOXO1-dependent expression of CCL2 and BCL2L11 which are involved in EC chemotaxis and apoptosis. In response to oxidative stress, initiates proapoptotic and antiapoptotic signaling in ECs via activation of NF-kappa-B and AKT1 and up-regulation of antiapoptotic protein BCL2. Negatively regulates MAP3K5/ASK1 kinase activity, autophosphorylation and oxidative stress-induced apoptosis mediated by MAP3K5/ASK1. Necessary for the assembly of TARDBP in heterogeneous nuclear ribonucleoprotein (hnRNP) complexes and regulates TARDBP binding to RNA UG repeats and TARDBP-dependent expression of HDAC6, ATG7 and VCP which are involved in clearance of protein aggregates. Plays an important role in platelet activation and aggregation. Regulates calcium mobilization and integrin ITGA2B:ITGB3 bidirectional signaling via increased ROS production as well as by facilitating the interaction between integrin and the cell cytoskeleton. Binds heparan sulfate glycosaminoglycans. The sequence is that of Peptidyl-prolyl cis-trans isomerase A (PPIA) from Oryctolagus cuniculus (Rabbit).